Here is a 230-residue protein sequence, read N- to C-terminus: MTTLTARPEAITFDPQQTALIVVDMQNAYATPGGYLDLAGFDVSTTRPVIANIQTAVTAARAAGMLIIWFQNGWDEQYVEAGGPGSPNFHKSNALKTMRKQPQLQGKLLAKGSWDYQLVDELVPQPGDIVLPKPRYSGFFNTPLDSILRSRGIRHLVFTGIATNVCVESTLRDGFFLEYFGVVLEDATHQAGPEFAQKAALFNIETFFGWVSDVETFCDALSSTSFARIA.

The active-site Proton acceptor is D24. The active site involves K133. C166 functions as the Nucleophile in the catalytic mechanism.

Belongs to the isochorismatase family. RutB subfamily.

The catalysed reaction is (Z)-3-ureidoacrylate + H2O + H(+) = (Z)-3-aminoacrylate + NH4(+) + CO2. It carries out the reaction (Z)-3-ureidoacrylate + H2O = (Z)-3-aminoacrylate + carbamate + H(+). The enzyme catalyses (Z)-2-methylureidoacrylate + H2O + H(+) = (Z)-2-methylaminoacrylate + NH4(+) + CO2. Functionally, hydrolyzes ureidoacrylate to form aminoacrylate and carbamate. The carbamate hydrolyzes spontaneously, thereby releasing one of the nitrogen atoms of the pyrimidine ring as ammonia and one of its carbon atoms as CO2. The sequence is that of Ureidoacrylate amidohydrolase RutB from Escherichia coli O81 (strain ED1a).